We begin with the raw amino-acid sequence, 514 residues long: Probable outer membrane protein pmp12 (514 aa).

Residues 1 to 21 (MTILRNFLTCSALFLALPAAA) form the signal peptide.

It belongs to the PMP outer membrane protein family.

Its subcellular location is the secreted. The protein localises to the cell wall. The protein resides in the cell outer membrane. The polypeptide is Probable outer membrane protein pmp12 (pmp12) (Chlamydia pneumoniae (Chlamydophila pneumoniae)).